A 689-amino-acid polypeptide reads, in one-letter code: MDQTQHPSKAAQPLRSEKTRHCDGFRIFLAALSFSYICKALGGVIMKSSITQIERRFDIPSSISGLIDGGFEIGNLLVIVFVSYFGSKLHRPKLIGTGCFIMGIGSILTALPHFFMGYYRYATENDISSLHNSTLTCLVNQTTSLTGTSPEIMEKGCEKGSNSYTWIYVLMGNMLRGIGETPIVPLGVSYIDDFAKEGNSSMYLGTLHTIAMIGPILGFIMSSVFAKLYVDVGYVDLRSVRITPQDARWVGAWWLGFIVNGLLCIICSIPFFFLPKIPKRSQKERKNSASLHVLKTDEDKNPVTNPTTQEKQAPANLTGFLWSLRSILTNEQYVIFLILTLLQISSFIGSFTYLFKFIEQQFGQTASQANFLLGVITIPTMASGMFLGGYLIKRLKLTLLGITKFVFFTTTMAYVFYLSYFLLICENKAFAGLTLTYDGMNPVDSHIDVPLSYCNSDCICDKNQWEPVCGENGVTYISPCLAGCKSFRGDKKLMNIEFYDCSCVSGSGFQKGNHSARLGECPRDKCKTKYYFYITFQVIISFFTALGSTSLMLILIRSVQPELKSLGMGFHSLVVRTLGGILAPVYYGALIDRTCMKWSVTSCGARGACRLYNSRLFGMIYVGLSIALKTPILLLYVALIYVMKRKMKRNDNKILENGRKFTDEGNPEPVNNNGYSCVPSDEKNSETPL.

The Cytoplasmic segment spans residues 1 to 26 (MDQTQHPSKAAQPLRSEKTRHCDGFR). Residues 27 to 46 (IFLAALSFSYICKALGGVIM) traverse the membrane as a helical segment. Residues 47–65 (KSSITQIERRFDIPSSISG) lie on the Extracellular side of the membrane. Residues 66 to 86 (LIDGGFEIGNLLVIVFVSYFG) form a helical membrane-spanning segment. At 87–92 (SKLHRP) the chain is on the cytoplasmic side. Residues 93–117 (KLIGTGCFIMGIGSILTALPHFFMG) form a helical membrane-spanning segment. Topologically, residues 118–163 (YYRYATENDISSLHNSTLTCLVNQTTSLTGTSPEIMEKGCEKGSNS) are extracellular. N-linked (GlcNAc...) asparagine glycans are attached at residues Asn-132 and Asn-140. A helical membrane pass occupies residues 164 to 192 (YTWIYVLMGNMLRGIGETPIVPLGVSYID). Residues 193-211 (DFAKEGNSSMYLGTLHTIA) are Cytoplasmic-facing. A helical membrane pass occupies residues 212-232 (MIGPILGFIMSSVFAKLYVDV). At 233-250 (GYVDLRSVRITPQDARWV) the chain is on the extracellular side. The helical transmembrane segment at 251 to 275 (GAWWLGFIVNGLLCIICSIPFFFLP) threads the bilayer. Residues 276 to 326 (KIPKRSQKERKNSASLHVLKTDEDKNPVTNPTTQEKQAPANLTGFLWSLRS) lie on the Cytoplasmic side of the membrane. Residues Ser-288 and Ser-290 each carry the phosphoserine modification. The helical transmembrane segment at 327–348 (ILTNEQYVIFLILTLLQISSFI) threads the bilayer. Over 349-368 (GSFTYLFKFIEQQFGQTASQ) the chain is Extracellular. Residues 369-392 (ANFLLGVITIPTMASGMFLGGYLI) traverse the membrane as a helical segment. Residues 393-396 (KRLK) are Cytoplasmic-facing. The helical transmembrane segment at 397-420 (LTLLGITKFVFFTTTMAYVFYLSY) threads the bilayer. Topologically, residues 421–533 (FLLICENKAF…DKCKTKYYFY (113 aa)) are extracellular. Residues 448–505 (DVPLSYCNSDCICDKNQWEPVCGENGVTYISPCLAGCKSFRGDKKLMNIEFYDCSCVS) form the Kazal-like domain. Disulfide bonds link Cys-454/Cys-484, Cys-460/Cys-480, and Cys-469/Cys-503. A glycan (N-linked (GlcNAc...) asparagine) is linked at Asn-513. Residues 534–556 (ITFQVIISFFTALGSTSLMLILI) traverse the membrane as a helical segment. At 557 to 565 (RSVQPELKS) the chain is on the cytoplasmic side. Residues 566–591 (LGMGFHSLVVRTLGGILAPVYYGALI) form a helical membrane-spanning segment. The Extracellular segment spans residues 592–625 (DRTCMKWSVTSCGARGACRLYNSRLFGMIYVGLS). A helical membrane pass occupies residues 626 to 643 (IALKTPILLLYVALIYVM). The Cytoplasmic segment spans residues 644-689 (KRKMKRNDNKILENGRKFTDEGNPEPVNNNGYSCVPSDEKNSETPL). Residues 658-689 (GRKFTDEGNPEPVNNNGYSCVPSDEKNSETPL) form a disordered region. Thr-662 is modified (phosphothreonine). Ser-680 is modified (phosphoserine). A compositionally biased stretch (basic and acidic residues) spans 680–689 (SDEKNSETPL).

The protein belongs to the organo anion transporter (TC 2.A.60) family. As to expression, liver specific.

The protein resides in the cell membrane. The catalysed reaction is estrone 3-sulfate(out) = estrone 3-sulfate(in). The enzyme catalyses taurocholate(out) = taurocholate(in). It catalyses the reaction prostaglandin E2(out) = prostaglandin E2(in). It carries out the reaction L-thyroxine(out) = L-thyroxine(in). In terms of biological role, mediates the Na(+)-independent uptake of organic anions such as taurochlate, bromosulfophthalein and steroid conjugates (estrone 3-sulfate, 17-beta-glucuronosyl estradiol, dehydroepiandrosterone sulfate). Also transports prostaglandin E2 and L-thyroxine (T4). Shows a pH-sensitive substrate specificity which may be ascribed to the protonation state of the binding site and leads to a stimulation of substrate transport in an acidic microenvironment. Hydrogencarbonate/HCO3(-) acts as the probable counteranion that exchanges for organic anions. This Mus musculus (Mouse) protein is Solute carrier organic anion transporter family member 1B2 (Slco1b2).